Reading from the N-terminus, the 67-residue chain is Neurotoxin Cex10 (67 aa).

The region spanning 1 to 65 (KDGYLVEVTG…TWPLPNKSCG (65 aa)) is the LCN-type CS-alpha/beta domain. 4 disulfides stabilise this stretch: Cys11–Cys64, Cys15–Cys40, Cys24–Cys45, and Cys28–Cys47. Position 64 is a cysteine amide (Cys64). Positions 65–67 (GKK) are excised as a propeptide.

This sequence belongs to the long (4 C-C) scorpion toxin superfamily. Sodium channel inhibitor family. Beta subfamily. In terms of tissue distribution, expressed by the venom gland.

The protein localises to the secreted. Functionally, beta toxins bind voltage-independently at site-4 of sodium channels (Nav) and shift the voltage of activation toward more negative potentials thereby affecting sodium channel activation and promoting spontaneous and repetitive firing. This is Neurotoxin Cex10 from Centruroides exilicauda (Bark scorpion).